Here is a 517-residue protein sequence, read N- to C-terminus: L-amino-acid oxidase (517 aa).

Positions 1–18 are cleaved as a signal peptide; sequence MNVFFMFSLLFLAALGSC. The cysteines at positions 29 and 192 are disulfide-linked. Residues 62-63, 82-83, arginine 90, and 106-109 contribute to the FAD site; these read MA, EA, and GPMR. Residue arginine 109 coordinates substrate. Asparagine 191 is a glycosylation site (N-linked (GlcNAc...) asparagine). An FAD-binding site is contributed by valine 280. Cysteine 350 and cysteine 431 are disulfide-bonded. Position 391 (tyrosine 391) interacts with substrate. FAD contacts are provided by residues glutamate 476 and 483–488; that span reads GWLDST. Residue 483-484 coordinates substrate; sequence GW.

Belongs to the flavin monoamine oxidase family. FIG1 subfamily. Homodimer; non-covalently linked. FAD serves as cofactor. Post-translationally, N-glycosylated. In terms of tissue distribution, expressed by the venom gland.

Its subcellular location is the secreted. The enzyme catalyses an L-alpha-amino acid + O2 + H2O = a 2-oxocarboxylate + H2O2 + NH4(+). In terms of biological role, catalyzes an oxidative deamination of predominantly hydrophobic and aromatic L-amino acids, thus producing hydrogen peroxide that may contribute to the diverse toxic effects of this enzyme. Exhibits diverse biological activities, such as hemorrhage, hemolysis, edema, apoptosis of vascular endothelial cells or tumor cell lines, antiparasitic activities, as well as regulation of platelet aggregation. Effects of snake L-amino oxidases on platelets are controversial, since they either induce aggregation or inhibit agonist-induced aggregation. These different effects are probably due to different experimental conditions. This protein has antibacterial activities. This Pseudechis australis (Mulga snake) protein is L-amino-acid oxidase.